The sequence spans 152 residues: Transcriptional regulator MraZ (152 aa).

2 consecutive SpoVT-AbrB domains span residues 5 to 52 and 81 to 124; these read ASAV…PLNQ and ATEC…SESE.

This sequence belongs to the MraZ family. Forms oligomers.

It localises to the cytoplasm. The protein resides in the nucleoid. This is Transcriptional regulator MraZ from Histophilus somni (strain 2336) (Haemophilus somnus).